Here is a 286-residue protein sequence, read N- to C-terminus: MAARVLRARGAAWAGGLLQRAAPCSLLPRLRTWTSSSNRSREDSWLKSLFVRKVDPRKDAHSNLLAKKETSNLYKLQFHNVKPECLEAYNKICQEVLPKIHEDKHYPCTLVGTWNTWYGEQDQAVHLWRYEGGYPALTEVMNKLRENKEFLEFRKARSDMLLSRKNQLLLEFSFWNEPVPRSGPNIYELRSYQLRPGTMIEWGNYWARAIRFRQDGNEAVGGFFSQIGQLYMVHHLWAYRDLQTREDIRNAAWHKHGWEELVYYTVPLIQEMESRIMIPLKTSPLQ.

The transit peptide at 1–23 (MAARVLRARGAAWAGGLLQRAAP) directs the protein to the mitochondrion.

The protein belongs to the NipSnap family. Interacts with CALCOCO2/NDP52, NBR1, SQSTM1/p62, TAX1BP1 and WDFY3/ALFY. Interacts with ATG8 family proteins (MAP1LC3A, MAP1LC3B, MAP1LC3C, GABARAP, GABARAPL1 and GABARAPL2). Interacts with VDAC1. In terms of tissue distribution, widely expressed. Most abundant in heart and skeletal muscle.

Its subcellular location is the mitochondrion matrix. In terms of biological role, protein involved in mitophagy by facilitating recruitment of the autophagy machinery required for clearance of damaged mitochondria. Accumulates on the mitochondria surface in response to mitochondrial depolarization and acts as a 'eat me' signal by recruiting proteins involved in selective autophagy, such as autophagy receptors (CALCOCO2/NDP52, NBR1, SQSTM1/p62, TAX1BP1 and WDFY3/ALFY) and ATG8 family proteins (MAP1LC3A, MAP1LC3B, MAP1LC3C, GABARAP, GABARAPL1 and GABARAPL2). This is Protein NipSnap homolog 2 from Homo sapiens (Human).